The following is a 220-amino-acid chain: Probable septum site-determining protein MinC (220 aa).

Belongs to the MinC family. Interacts with MinD and FtsZ.

Its function is as follows. Cell division inhibitor that blocks the formation of polar Z ring septums. Rapidly oscillates between the poles of the cell to destabilize FtsZ filaments that have formed before they mature into polar Z rings. Prevents FtsZ polymerization. The chain is Probable septum site-determining protein MinC from Vibrio campbellii (strain ATCC BAA-1116).